Here is a 147-residue protein sequence, read N- to C-terminus: Hemoglobin subunit gamma-1 (147 aa).

G2 is subject to N-acetylglycine; in form Hb F1. Positions 3–147 constitute a Globin domain; the sequence is HFTEEDKATI…VASALSSRYH (145 aa). The residue at position 13 (T13) is a Phosphothreonine. Phosphoserine occurs at positions 45, 51, and 53. Position 60 is an N6-acetyllysine (K60). H64 contributes to the heme b binding site. N6-acetyllysine is present on K83. H93 contacts heme b. C94 bears the S-nitrosocysteine mark. S140 bears the Phosphoserine mark.

This sequence belongs to the globin family. As to quaternary structure, heterotetramer of two alpha chains and two gamma chains in fetal hemoglobin (Hb F). In the case of deletions affecting one or more of the alpha chains, the excess gamma chains form homotetramers that exhibit neither Bohr effect nor heme-heme cooperativity (hemoglobin Bart's). In terms of processing, acetylation of Gly-2 converts Hb F to the minor Hb F1. In terms of tissue distribution, red blood cells.

Functionally, gamma chains make up the fetal hemoglobin F, in combination with alpha chains. This chain is Hemoglobin subunit gamma-1 (HBG1), found in Homo sapiens (Human).